Reading from the N-terminus, the 225-residue chain is Ribosomal RNA small subunit methyltransferase G (225 aa).

S-adenosyl-L-methionine contacts are provided by residues Gly71, Leu76, 121–122, and Arg139; that span reads AE. The interval 204–225 is disordered; it reads VVEARRATPSNGRGRPGRSSRR.

It belongs to the methyltransferase superfamily. RNA methyltransferase RsmG family.

It is found in the cytoplasm. Its function is as follows. Specifically methylates the N7 position of guanine in position 518 of 16S rRNA. The polypeptide is Ribosomal RNA small subunit methyltransferase G (Mycobacterium sp. (strain KMS)).